The sequence spans 504 residues: Ent-kaurene oxidase-like 3 (504 aa).

Residues serine 3–isoleucine 23 form a helical membrane-spanning segment. Residue cysteine 448 coordinates heme.

This sequence belongs to the cytochrome P450 family. It depends on heme as a cofactor. Expressed in leaf blades.

The protein localises to the membrane. May hydroxylate diterpenes. The chain is Ent-kaurene oxidase-like 3 from Oryza sativa subsp. japonica (Rice).